A 125-amino-acid chain; its full sequence is Large ribosomal subunit protein bL12 (125 aa).

This sequence belongs to the bacterial ribosomal protein bL12 family. Homodimer. Part of the ribosomal stalk of the 50S ribosomal subunit. Forms a multimeric L10(L12)X complex, where L10 forms an elongated spine to which 2 to 4 L12 dimers bind in a sequential fashion. Binds GTP-bound translation factors.

Forms part of the ribosomal stalk which helps the ribosome interact with GTP-bound translation factors. Is thus essential for accurate translation. The polypeptide is Large ribosomal subunit protein bL12 (Campylobacter concisus (strain 13826)).